The chain runs to 252 residues: tRNA (guanine-N(1)-)-methyltransferase (252 aa).

S-adenosyl-L-methionine is bound by residues Gly113 and 133 to 138 (IGDYVL).

The protein belongs to the RNA methyltransferase TrmD family. As to quaternary structure, homodimer.

The protein localises to the cytoplasm. It catalyses the reaction guanosine(37) in tRNA + S-adenosyl-L-methionine = N(1)-methylguanosine(37) in tRNA + S-adenosyl-L-homocysteine + H(+). Functionally, specifically methylates guanosine-37 in various tRNAs. The sequence is that of tRNA (guanine-N(1)-)-methyltransferase from Xanthomonas campestris pv. campestris (strain 8004).